Here is a 189-residue protein sequence, read N- to C-terminus: Glycerol-3-phosphate acyltransferase (189 aa).

4 helical membrane passes run 1–21 (MVWLLAILAYLLGSLSFAILL), 79–99 (QQAWIGLAAVSGHLYPLYFNF), 113–133 (LGLYPPAVLPAVAAWLLVFAF), and 151–171 (LLAWRQPEALLPMLLLYGVIV).

This sequence belongs to the PlsY family. In terms of assembly, probably interacts with PlsX.

It localises to the cell inner membrane. The enzyme catalyses an acyl phosphate + sn-glycerol 3-phosphate = a 1-acyl-sn-glycero-3-phosphate + phosphate. The protein operates within lipid metabolism; phospholipid metabolism. In terms of biological role, catalyzes the transfer of an acyl group from acyl-phosphate (acyl-PO(4)) to glycerol-3-phosphate (G3P) to form lysophosphatidic acid (LPA). This enzyme utilizes acyl-phosphate as fatty acyl donor, but not acyl-CoA or acyl-ACP. This Azotobacter vinelandii (strain DJ / ATCC BAA-1303) protein is Glycerol-3-phosphate acyltransferase.